Reading from the N-terminus, the 304-residue chain is N-acetyl-D-glucosamine kinase (304 aa).

ATP contacts are provided by residues 4–11 (GFDIGGTK) and 133–140 (GFGGGLIF). Residues H157, C178, C180, and C185 each coordinate Zn(2+).

It belongs to the ROK (NagC/XylR) family. NagK subfamily.

It carries out the reaction N-acetyl-D-glucosamine + ATP = N-acetyl-D-glucosamine 6-phosphate + ADP + H(+). It participates in cell wall biogenesis; peptidoglycan recycling. Its function is as follows. Catalyzes the phosphorylation of N-acetyl-D-glucosamine (GlcNAc) derived from cell-wall degradation, yielding GlcNAc-6-P. The protein is N-acetyl-D-glucosamine kinase of Mannheimia succiniciproducens (strain KCTC 0769BP / MBEL55E).